A 629-amino-acid chain; its full sequence is LEAF RUST 10 DISEASE-RESISTANCE LOCUS RECEPTOR-LIKE PROTEIN KINASE-like 1.1 (629 aa).

Positions 1-19 (METVSVLLFFFLFLLAAEA) are cleaved as a signal peptide. Residues 20–225 (RSTKRTGCKD…PNNYHAEMRL (206 aa)) are Extracellular-facing. 6 N-linked (GlcNAc...) asparagine glycosylation sites follow: asparagine 56, asparagine 92, asparagine 123, asparagine 124, asparagine 172, and asparagine 177. Residues 226–246 (GLGIGGSVILIIILVALFAVI) traverse the membrane as a helical segment. The Cytoplasmic segment spans residues 247 to 629 (HRNYRRKDGS…TTPNTSAYEF (383 aa)). A Protein kinase domain is found at 291–565 (FSKDRLLGDG…TMEQVVHELK (275 aa)). ATP is bound by residues 297 to 305 (LGDGGFGTV) and lysine 319. Residue tyrosine 365 is modified to Phosphotyrosine. The active-site Proton acceptor is the aspartate 416. Serine 449 bears the Phosphoserine mark. Residues threonine 450 and threonine 455 each carry the phosphothreonine modification. Tyrosine 463 carries the phosphotyrosine modification. Positions 609 to 629 (VSVTDQWTSKSTTPNTSAYEF) are disordered.

This sequence belongs to the protein kinase superfamily. Ser/Thr protein kinase family.

It localises to the cell membrane. It catalyses the reaction L-seryl-[protein] + ATP = O-phospho-L-seryl-[protein] + ADP + H(+). It carries out the reaction L-threonyl-[protein] + ATP = O-phospho-L-threonyl-[protein] + ADP + H(+). This is LEAF RUST 10 DISEASE-RESISTANCE LOCUS RECEPTOR-LIKE PROTEIN KINASE-like 1.1 from Arabidopsis thaliana (Mouse-ear cress).